Consider the following 123-residue polypeptide: Aspartate 1-decarboxylase (123 aa).

Ser-25 serves as the catalytic Schiff-base intermediate with substrate; via pyruvic acid. Position 25 is a pyruvic acid (Ser) (Ser-25). Thr-57 provides a ligand contact to substrate. Tyr-58 (proton donor) is an active-site residue. 73–75 (GAA) is a binding site for substrate.

It belongs to the PanD family. Heterooctamer of four alpha and four beta subunits. Requires pyruvate as cofactor. Post-translationally, is synthesized initially as an inactive proenzyme, which is activated by self-cleavage at a specific serine bond to produce a beta-subunit with a hydroxyl group at its C-terminus and an alpha-subunit with a pyruvoyl group at its N-terminus.

Its subcellular location is the cytoplasm. The enzyme catalyses L-aspartate + H(+) = beta-alanine + CO2. Its pathway is cofactor biosynthesis; (R)-pantothenate biosynthesis; beta-alanine from L-aspartate: step 1/1. Its function is as follows. Catalyzes the pyruvoyl-dependent decarboxylation of aspartate to produce beta-alanine. The polypeptide is Aspartate 1-decarboxylase (Clostridium novyi (strain NT)).